The chain runs to 42 residues: Protein MGF 360-20R (42 aa).

This sequence belongs to the asfivirus MGF 360 family.

Functionally, plays a role in virus cell tropism, and may be required for efficient virus replication in macrophages. This African swine fever virus (strain Badajoz 1971 Vero-adapted) (Ba71V) protein is Protein MGF 360-20R.